A 644-amino-acid polypeptide reads, in one-letter code: Leucine-rich repeat protein soc-2 homolog (644 aa).

Residues 1-19 (MNLCSSGATASTTSLSSTG) show a composition bias toward low complexity. Disordered regions lie at residues 1-60 (MNLC…APTL) and 82-150 (NSPA…IQAD). Gly residues-rich tracts occupy residues 26 to 50 (GVPGGGAEGGGGDGGSGNSGGGGKA) and 87 to 96 (GAGGASGFTG). Residues 99–117 (QQPTGSNGHSHLHNENNAN) show a composition bias toward polar residues. LRR repeat units lie at residues 164-185 (GIKRLDLSKSSITVIPSTVKEC), 187-208 (HLTELYLYSNKIGQLPPEIGCL), 210-231 (SLRNLALNENSLTSLPESLQNC), 233-254 (QLKVLDLRHNKLAEIPPVIYRL), 256-277 (SLTTLYLRFNRITAVADDLRQL), 279-300 (NLTMLSLRENKIRELGSAIGAL), 302-323 (NLTTLDVSHNHLEHLPEDIGNC), 325-346 (NLSALDLQHNELLDIPDSIGNL), 348-370 (SLVRLGMRYNRLNSVPATLKNCK), 371-392 (SMDEFNVEGNGITQLPDGMLAS), 395-416 (GLTTITLSRNQFASYPTGGPAQ), 419-440 (NVYSINLEHNRIDKIPYGIFSR), 443-464 (GLTKLNMKENMLTALPLDIGTW), 466-487 (NMVELNLATNALQKLPDDIMNL), 489-510 (NLEILILSNNMLKKIPNTIGNL), 512-533 (RLRILDLEENRIEVLPHEIGLL), 535-556 (ELQRLILQTNQITMLPRSIGHL), 558-579 (NLTHLSVSENNLQFLPEEIGSL), 581-603 (SLENLYINQNPGLEKLPFELALC), and 605-626 (NLKYLNIDKCPLSTIPPEIQAG).

This sequence belongs to the SHOC2 family.

Acts as a Ras effector and participates in MAPK pathway activation. Probably acts as a regulatory subunit of protein phosphatase that specifically dephosphorylates Raf kinase and stimulate Raf activity at specialized signaling complexes upon Ras activation. In Drosophila erecta (Fruit fly), this protein is Leucine-rich repeat protein soc-2 homolog (Sur-8).